A 207-amino-acid polypeptide reads, in one-letter code: MARYIGPKAKLSRREGTDLFLKSARRSLADKCKLDSKPGQHGRTSGARTSDYGTQLREKQKVKRIYGVLERQFRRYFAEADRRKGNTGENLLQLLESRLDNVVYRMGFGSTRAEARQLVSHKAITVNGIVANIPSQQVKAGDVISIREKAKKQARIVEALSLAEQGGMPSWVAVDAKKFEGTFKQVPERADIAGDINESLIVELYSR.

Positions 31-55 (KCKLDSKPGQHGRTSGARTSDYGTQ) are disordered. The segment covering 42–53 (GRTSGARTSDYG) has biased composition (polar residues). Residues 97-160 (SRLDNVVYRM…KKQARIVEAL (64 aa)) form the S4 RNA-binding domain.

This sequence belongs to the universal ribosomal protein uS4 family. Part of the 30S ribosomal subunit. Contacts protein S5. The interaction surface between S4 and S5 is involved in control of translational fidelity.

One of the primary rRNA binding proteins, it binds directly to 16S rRNA where it nucleates assembly of the body of the 30S subunit. Its function is as follows. With S5 and S12 plays an important role in translational accuracy. This chain is Small ribosomal subunit protein uS4, found in Burkholderia thailandensis (strain ATCC 700388 / DSM 13276 / CCUG 48851 / CIP 106301 / E264).